The chain runs to 343 residues: Probable dual-specificity RNA methyltransferase RlmN (343 aa).

The active-site Proton acceptor is E93. The 222-residue stretch at 99-320 (TDDRATLCVS…NAKGVVCTIR (222 aa)) folds into the Radical SAM core domain. C106 and C331 form a disulfide bridge. [4Fe-4S] cluster contacts are provided by C113, C117, and C120. S-adenosyl-L-methionine-binding positions include 158 to 159 (GE), S190, 212 to 214 (SLH), and H288. The active-site S-methylcysteine intermediate is C331.

The protein belongs to the radical SAM superfamily. RlmN family. Requires [4Fe-4S] cluster as cofactor.

The protein resides in the cytoplasm. It carries out the reaction adenosine(2503) in 23S rRNA + 2 reduced [2Fe-2S]-[ferredoxin] + 2 S-adenosyl-L-methionine = 2-methyladenosine(2503) in 23S rRNA + 5'-deoxyadenosine + L-methionine + 2 oxidized [2Fe-2S]-[ferredoxin] + S-adenosyl-L-homocysteine. The enzyme catalyses adenosine(37) in tRNA + 2 reduced [2Fe-2S]-[ferredoxin] + 2 S-adenosyl-L-methionine = 2-methyladenosine(37) in tRNA + 5'-deoxyadenosine + L-methionine + 2 oxidized [2Fe-2S]-[ferredoxin] + S-adenosyl-L-homocysteine. Specifically methylates position 2 of adenine 2503 in 23S rRNA and position 2 of adenine 37 in tRNAs. The sequence is that of Probable dual-specificity RNA methyltransferase RlmN from Parabacteroides distasonis (strain ATCC 8503 / DSM 20701 / CIP 104284 / JCM 5825 / NCTC 11152).